Reading from the N-terminus, the 417-residue chain is Serine hydroxymethyltransferase 1 (417 aa).

(6S)-5,6,7,8-tetrahydrofolate-binding positions include Leu-121 and 125–127 (GHL). Lys-229 carries the post-translational modification N6-(pyridoxal phosphate)lysine. 355 to 357 (SPF) serves as a coordination point for (6S)-5,6,7,8-tetrahydrofolate.

Belongs to the SHMT family. In terms of assembly, homodimer. It depends on pyridoxal 5'-phosphate as a cofactor.

The protein localises to the cytoplasm. The catalysed reaction is (6R)-5,10-methylene-5,6,7,8-tetrahydrofolate + glycine + H2O = (6S)-5,6,7,8-tetrahydrofolate + L-serine. The protein operates within one-carbon metabolism; tetrahydrofolate interconversion. It functions in the pathway amino-acid biosynthesis; glycine biosynthesis; glycine from L-serine: step 1/1. Functionally, catalyzes the reversible interconversion of serine and glycine with tetrahydrofolate (THF) serving as the one-carbon carrier. This reaction serves as the major source of one-carbon groups required for the biosynthesis of purines, thymidylate, methionine, and other important biomolecules. Also exhibits THF-independent aldolase activity toward beta-hydroxyamino acids, producing glycine and aldehydes, via a retro-aldol mechanism. This is Serine hydroxymethyltransferase 1 from Pectobacterium atrosepticum (strain SCRI 1043 / ATCC BAA-672) (Erwinia carotovora subsp. atroseptica).